The primary structure comprises 116 residues: Phycoerythrin alpha-3 subunit (116 aa).

5 residues coordinate (2R,3E)-phycoerythrobilin: serine 53, glutamate 63, arginine 64, cysteine 67, and lysine 85.

Belongs to the phycoerythrin family. As to quaternary structure, heterotetramer of 2 different alpha chains and 2 identical beta chains which form 2 alpha-beta heterodimers within the heterotetramer. The two alpha-beta heterodimers are rotated to an open configuration in contrast to the closed configuration found in other cryptophyte species due to the insertion of a single amino acid, Asp-65, in a conserved region of the alpha chain. In the open form, the central chromophores are not in physical contact but are separated by a water-filled channel. Post-translationally, contains three phycoerythrobilin chromophores with binding mediated by both the alpha and beta subunits.

Its subcellular location is the plastid. It is found in the chloroplast thylakoid membrane. Light-harvesting photosynthetic tetrapyrrole chromophore-protein from the phycobiliprotein complex. This is Phycoerythrin alpha-3 subunit from Hemiselmis andersenii (Cryptophyte alga).